A 31-amino-acid polypeptide reads, in one-letter code: Glucagon-5 (31 aa).

This sequence belongs to the glucagon family.

The protein localises to the secreted. Its function is as follows. Glucagon plays a key role in glucose metabolism and homeostasis. Regulates blood glucose by increasing gluconeogenesis and decreasing glycolysis. In Huso dauricus (Kaluga sturgeon), this protein is Glucagon-5.